Reading from the N-terminus, the 128-residue chain is Aspartate 1-decarboxylase (128 aa).

The active-site Schiff-base intermediate with substrate; via pyruvic acid is Ser-25. Ser-25 carries the pyruvic acid (Ser) modification. Thr-57 is a binding site for substrate. Tyr-58 (proton donor) is an active-site residue. 73 to 75 (GSA) is a substrate binding site.

The protein belongs to the PanD family. Heterooctamer of four alpha and four beta subunits. It depends on pyruvate as a cofactor. In terms of processing, is synthesized initially as an inactive proenzyme, which is activated by self-cleavage at a specific serine bond to produce a beta-subunit with a hydroxyl group at its C-terminus and an alpha-subunit with a pyruvoyl group at its N-terminus.

The protein localises to the cytoplasm. It catalyses the reaction L-aspartate + H(+) = beta-alanine + CO2. Its pathway is cofactor biosynthesis; (R)-pantothenate biosynthesis; beta-alanine from L-aspartate: step 1/1. Its function is as follows. Catalyzes the pyruvoyl-dependent decarboxylation of aspartate to produce beta-alanine. The chain is Aspartate 1-decarboxylase from Paraburkholderia xenovorans (strain LB400).